We begin with the raw amino-acid sequence, 193 residues long: Apoptosis-associated speck-like protein containing a CARD (193 aa).

The Pyrin domain maps to 1-91 (MGRARDAILD…AEQLQTTKEE (91 aa)). Residues Lys55 and Lys172 each participate in a glycyl lysine isopeptide (Lys-Gly) (interchain with G-Cter in ubiquitin) cross-link. Positions 105 to 193 (STARTGHFVD…PYLVMDLEQS (89 aa)) constitute a CARD domain. At Ser193 the chain carries Phosphoserine.

As to quaternary structure, self-associates; enforced oligomerization induces apoptosis, NF-kappa-B regulation and interleukin-1 beta secretion. Homooligomers can form disk-like particles of approximately 12 nm diameter and approximately 1 nm height. Component of several inflammasomes containing one pattern recognition receptor/sensor, such as NLRP2, NLRP3, NLRP6, NLRC4, AIM2, MEFV or NOD2, and probably NLRC4 or NLRP12. Major component of the ASC pyroptosome, a 1-2 um supramolecular assembly (one per macrophage cell) which consists of oligomerized PYCARD dimers and CASP1. Interacts with CASP1 (precursor form); the interaction induces activation of CASP1 leading to the processing of interleukin-1 beta; PYCARD competes with RIPK2 for binding to CASP1. Interacts with NLRP3; the interaction requires the homooligomerization of NLRP3. Interacts with NLRP2, NLRC4, MEFV, CARD16, AIM2, NOD2, RIGI, RIPK2, PYDC1, PYDC2, NLRP10, CHUK, IKBKB and BAX. Interacts with CASP8. Component of the AIM2 PANoptosome complex, a multiprotein complex that drives inflammatory cell death (PANoptosis). In terms of processing, phosphorylated. 'Lys-63'-linked polyubiquitination by TRAF3 is critical for speck formation and inflammasome activation. 'Lys-63'-linked deubiquitinated by USP50; a crucial step for NLRP3-mediated inflammasome activation. 'Lys-63'-linked polyubiquitination by PELI1 is also critical for speck formation and inflammasome activation. Deubiquitinated by USP3 that cleaves 'Lys-48'-linked ubiquitin chains and strengthens its stability by blocking proteasomal degradation. Expressed in small intestine, colon, thymus, spleen, brain, heart, skeletal muscle, kidney, lung and liver.

It is found in the cytoplasm. The protein localises to the inflammasome. It localises to the endoplasmic reticulum. The protein resides in the mitochondrion. Its subcellular location is the nucleus. Functions as a key mediator in apoptosis and inflammation. Promotes caspase-mediated apoptosis involving predominantly caspase-8 and also caspase-9 in a probable cell type-specific manner. Involved in activation of the mitochondrial apoptotic pathway, promotes caspase-8-dependent proteolytic maturation of BID independently of FADD in certain cell types and also mediates mitochondrial translocation of BAX and activates BAX-dependent apoptosis coupled to activation of caspase-9, -2 and -3. Involved in innate immune response by acting as an integral adapter in the assembly of various inflammasomes (NLRP2, NLRP3, NLRP6 and AIM2) which recruit and activate caspase-1 leading to processing and secretion of pro-inflammatory cytokines. Caspase-1-dependent inflammation leads to macrophage pyroptosis, a form of cell death. The function as activating adapter in different types of inflammasomes is mediated by the pyrin and CARD domains and their homotypic interactions. Clustered PYCARD nucleates the formation of caspase-1 filaments through the interaction of their respective CARD domains, acting as a platform for of caspase-1 polymerization. In the NLRC4 inflammasomes seems not be required but facilitates the processing of procaspase-1. In cooperation with NOD2 involved in an inflammasome activated by bacterial muramyl dipeptide leading to caspase-1 activation. May be involved in RIGI-triggered pro-inflammatory responses and inflammasome activation. In collaboration with AIM2 which detects cytosolic double-stranded DNA may also be involved in a caspase-1-independent cell death that involves caspase-8. In adaptive immunity may be involved in maturation of dendritic cells to stimulate T-cell immunity and in cytoskeletal rearrangements coupled to chemotaxis and antigen uptake may be involved in post-transcriptional regulation of the guanine nucleotide exchange factor DOCK2; the latter function is proposed to involve the nuclear form. Also involved in transcriptional activation of cytokines and chemokines independent of the inflammasome; this function may involve AP-1, NF-kappa-B, MAPK and caspase-8 signaling pathways. For regulation of NF-kappa-B activating and inhibiting functions have been reported. Modulates NF-kappa-B induction at the level of the IKK complex by inhibiting kinase activity of CHUK and IKBK. Proposed to compete with RIPK2 for association with CASP1 thereby down-regulating CASP1-mediated RIPK2-dependent NF-kappa-B activation and activating interleukin-1 beta processing. Modulates host resistance to DNA virus infection, probably by inducing the cleavage of and inactivating CGAS in presence of cytoplasmic double-stranded DNA. The sequence is that of Apoptosis-associated speck-like protein containing a CARD (Pycard) from Mus musculus (Mouse).